The primary structure comprises 1644 residues: Terminal uridylyltransferase 4 (1644 aa).

Disordered regions lie at residues 31 to 63 (NQTL…QNDI), 96 to 168 (CKAK…SLLL), and 205 to 257 (ALQN…EMDY). The span at 36 to 46 (ARNDKSVKEIE) shows a compositional bias: basic and acidic residues. The residue at position 104 (S104) is a Phosphoserine. Positions 112–125 (TISQAKSEKATSLQ) are enriched in polar residues. Phosphoserine is present on residues S134 and S156. Polar residues predominate over residues 206–222 (LQNSPRSQKQQTCTDNT). The span at 238–252 (DLSKMKNDESNKENS) shows a compositional bias: basic and acidic residues. Positions 253–333 (SEMDYLENAT…KEKRHKKNIL (81 aa)) are required for interaction with LIN28A and pre-let-7 RNA. The Zn(2+) site is built by C306, C309, H322, and H328. The disordered stretch occupies residues 579–617 (EKNSIAEENKAKADQPKDDTKKTETDNQSNAMKEKHGKS). Positions 582–603 (SIAEENKAKADQPKDDTKKTET) are enriched in basic and acidic residues. The PAP-associated 1 domain maps to 628–678 (SLGQLWLELLKFYTLDFALEEYVICVRIQDILTRENKNWPKRRIAIEDPFS). Residues 794 to 816 (GQDSSSLSTSKSSEIEPKLDKKQ) are disordered. Residues 806 to 816 (SEIEPKLDKKQ) show a composition bias toward basic and acidic residues. The interval 901–1634 (DKFILTSGKP…CATRRCRERC (734 aa)) is sufficient for monouridylation activity. Residues 913 to 930 (IVCSICKKDGHSKNDCPE) form a CCHC-type 1 zinc finger. UTP contacts are provided by residues 998–1001 (SSKN), 1008–1011 (SDLD), N1081, K1103, 1121–1125 (SYAYI), and H1237. The Mg(2+) site is built by D1009 and D1011. In terms of domain architecture, PAP-associated 2 spans 1184 to 1237 (SLGELWLGLLRFYTEEFDFKEYVISIRQKKLLTTFEKQWTSKCIAIEDPFDLNH). A CCHC-type 2 zinc finger spans residues 1293–1310 (RCCRVCGKIGHYMKDCPK). The disordered stretch occupies residues 1321–1348 (KDSEEEKEGNEEEKDSRDVLDPRDLHDT). A compositionally biased stretch (basic and acidic residues) spans 1334–1348 (KDSRDVLDPRDLHDT). A CCHC-type 3 zinc finger spans residues 1357–1374 (LRCFICGDAGHVRRECPE). Residues 1401–1426 (AGSAQQQGDQSIRTRQSSECSESPSY) are compositionally biased toward low complexity. The interval 1401–1482 (AGSAQQQGDQ…LYNFPQSPPA (82 aa)) is disordered. Over residues 1441 to 1452 (AAITQPSSQPGS) the composition is skewed to polar residues. Residues 1453–1470 (QPKLGPPQQGAQPPHQVQ) are compositionally biased toward low complexity. Residue R1624 is modified to Omega-N-methylarginine.

The protein belongs to the DNA polymerase type-B-like family. In terms of assembly, interacts with LIN28A in the presence of pre-let-7 RNA. Interacts with T2BP. Interacts with MOV10; the interaction is RNA-dependent. The cofactor is Mg(2+). Mn(2+) is required as a cofactor.

Its subcellular location is the nucleus. It is found in the cytoplasm. The protein resides in the cytoplasmic ribonucleoprotein granule. The enzyme catalyses RNA(n) + UTP = RNA(n)-3'-uridine ribonucleotide + diphosphate. In terms of biological role, uridylyltransferase that mediates the terminal uridylation of mRNAs with short (less than 25 nucleotides) poly(A) tails, hence facilitating global mRNA decay. Essential for both oocyte maturation and fertility. Through 3' terminal uridylation of mRNA, sculpts, with TUT7, the maternal transcriptome by eliminating transcripts during oocyte growth. Involved in microRNA (miRNA)-induced gene silencing through uridylation of deadenylated miRNA targets. Also functions as an integral regulator of microRNA biogenesis using 3 different uridylation mechanisms. Acts as a suppressor of miRNA biogenesis by mediating the terminal uridylation of some miRNA precursors, including that of let-7 (pre-let-7), miR107, miR-143 and miR-200c. Uridylated miRNAs are not processed by Dicer and undergo degradation. Degradation of pre-let-7 contributes to the maintenance of embryonic stem (ES) cell pluripotency. Also catalyzes the 3' uridylation of miR-26A, a miRNA that targets IL6 transcript. This abrogates the silencing of IL6 transcript, hence promoting cytokine expression. In the absence of LIN28A, TUT7 and TUT4 monouridylate group II pre-miRNAs, which includes most of pre-let7 members, that shapes an optimal 3' end overhang for efficient processing. Adds oligo-U tails to truncated pre-miRNAS with a 5' overhang which may promote rapid degradation of non-functional pre-miRNA species. May also suppress Toll-like receptor-induced NF-kappa-B activation via binding to T2BP. Does not play a role in replication-dependent histone mRNA degradation. Due to functional redundancy between TUT4 and TUT7, the identification of the specific role of each of these proteins is difficult. TUT4 and TUT7 restrict retrotransposition of long interspersed element-1 (LINE-1) in cooperation with MOV10 counteracting the RNA chaperonne activity of L1RE1. TUT7 uridylates LINE-1 mRNAs in the cytoplasm which inhibits initiation of reverse transcription once in the nucleus, whereas uridylation by TUT4 destabilizes mRNAs in cytoplasmic ribonucleoprotein granules. In Homo sapiens (Human), this protein is Terminal uridylyltransferase 4.